Consider the following 306-residue polypeptide: Protease HtpX homolog (306 aa).

A run of 2 helical transmembrane segments spans residues 10–30 (TTLL…ATGG) and 33–53 (QTLS…YWFS). Histidine 135 is a binding site for Zn(2+). The active site involves glutamate 136. Histidine 139 provides a ligand contact to Zn(2+). The next 2 helical transmembrane spans lie at 149 to 169 (AIAS…MYFG) and 181 to 201 (GLGL…ASLI). Glutamate 210 contributes to the Zn(2+) binding site.

Belongs to the peptidase M48B family. Zn(2+) serves as cofactor.

Its subcellular location is the cell membrane. This Bifidobacterium longum (strain NCC 2705) protein is Protease HtpX homolog.